The sequence spans 399 residues: CCA-adding enzyme (399 aa).

Residues Gly32 and Arg35 each coordinate ATP. Gly32 and Arg35 together coordinate CTP. Mg(2+) is bound by residues Asp45 and Asp47. Arg116, Asp159, Arg162, Arg165, and Arg168 together coordinate ATP. 5 residues coordinate CTP: Arg116, Asp159, Arg162, Arg165, and Arg168.

It belongs to the tRNA nucleotidyltransferase/poly(A) polymerase family. Bacterial CCA-adding enzyme type 3 subfamily. Homodimer. Mg(2+) serves as cofactor.

The enzyme catalyses a tRNA precursor + 2 CTP + ATP = a tRNA with a 3' CCA end + 3 diphosphate. It carries out the reaction a tRNA with a 3' CCA end + 2 CTP + ATP = a tRNA with a 3' CCACCA end + 3 diphosphate. In terms of biological role, catalyzes the addition and repair of the essential 3'-terminal CCA sequence in tRNAs without using a nucleic acid template. Adds these three nucleotides in the order of C, C, and A to the tRNA nucleotide-73, using CTP and ATP as substrates and producing inorganic pyrophosphate. tRNA 3'-terminal CCA addition is required both for tRNA processing and repair. Also involved in tRNA surveillance by mediating tandem CCA addition to generate a CCACCA at the 3' terminus of unstable tRNAs. While stable tRNAs receive only 3'-terminal CCA, unstable tRNAs are marked with CCACCA and rapidly degraded. The protein is CCA-adding enzyme of Streptococcus pneumoniae serotype 19F (strain G54).